We begin with the raw amino-acid sequence, 297 residues long: Probable endonuclease 4 (297 aa).

Positions 1–21 (MPEIGAHVSAAGGPQRAPERG) are disordered. His-67, His-107, Glu-145, Asp-179, His-182, His-216, Asp-229, His-231, and Glu-261 together coordinate Zn(2+).

This sequence belongs to the AP endonuclease 2 family. Zn(2+) is required as a cofactor.

The catalysed reaction is Endonucleolytic cleavage to 5'-phosphooligonucleotide end-products.. Endonuclease IV plays a role in DNA repair. It cleaves phosphodiester bonds at apurinic or apyrimidinic (AP) sites, generating a 3'-hydroxyl group and a 5'-terminal sugar phosphate. The sequence is that of Probable endonuclease 4 from Halorhodospira halophila (strain DSM 244 / SL1) (Ectothiorhodospira halophila (strain DSM 244 / SL1)).